We begin with the raw amino-acid sequence, 385 residues long: S-type anion channel SLAH1 (385 aa).

Residues 1 to 42 (MEIPRQEIHIEIDNSIPSSKEFKTGLADAKPVVLMSALRSLH) are Cytoplasmic-facing. A helical transmembrane segment spans residues 43–65 (AGYFRISLSLCSQALLWKIMIAP). Topologically, residues 66-81 (ESPSMSHMHSKLPSMA) are extracellular. The helical transmembrane segment at 82 to 102 (FHLLWYLALVTQVSLCFLYAL) threads the bilayer. Over 103–114 (KCIFFFDKVKEE) the chain is Cytoplasmic. A helical transmembrane segment spans residues 115–135 (FLHYIGVNYLYAPSISWLLML). Residues 136-150 (QSAPMMEPNSVLYQT) are Extracellular-facing. The helical transmembrane segment at 151-171 (LFWIFAVPVLTLDIKLYGQWF) threads the bilayer. Residues 172-176 (TTEKR) lie on the Cytoplasmic side of the membrane. A helical membrane pass occupies residues 177–197 (FLSMLANPASQVSVIANLVAA). Residues 198-207 (RGAAEMGWNE) lie on the Extracellular side of the membrane. Residues 208–228 (CALCMFSLGMVHYLVIFVTLY) traverse the membrane as a helical segment. Residues 229-243 (QRLPGGNNFPAKLRP) lie on the Cytoplasmic side of the membrane. Residues 244–264 (IFFLFVAAPAMASLAWNSICG) traverse the membrane as a helical segment. Residue Thr265 is a topological domain, extracellular. The helical transmembrane segment at 266–286 (FDAVAKMLFFLSLFIFMSLVC) threads the bilayer. The Cytoplasmic segment spans residues 287 to 299 (RPNLFKKSMKRFN). A helical membrane pass occupies residues 300-320 (VAWWAYSFPLTFLALDSVQYA). Topologically, residues 321–330 (QEVKDPVGSG) are extracellular. The chain crosses the membrane as a helical span at residues 331-351 (LMLIFSSISVLIFLGMMVLTA). The Cytoplasmic portion of the chain corresponds to 352-385 (ANSNRLLRHDPVLGSATDPKDKQKTLSLNATNQN). A disordered region spans residues 366–385 (SATDPKDKQKTLSLNATNQN). Residues 376–385 (TLSLNATNQN) show a composition bias toward polar residues.

It belongs to the SLAC1 S-type anion channel family. As to quaternary structure, homotrimer. Expressed in the vascular systems of root.

Its subcellular location is the cell membrane. Its function is as follows. Slow, weak voltage-dependent S-type anion efflux channel involved in maintenance of anion homeostasis. The sequence is that of S-type anion channel SLAH1 (SLAH1) from Arabidopsis thaliana (Mouse-ear cress).